The primary structure comprises 468 residues: ATP synthase subunit beta (468 aa).

148–155 lines the ATP pocket; it reads GGAGVGKT.

The protein belongs to the ATPase alpha/beta chains family. In terms of assembly, F-type ATPases have 2 components, CF(1) - the catalytic core - and CF(0) - the membrane proton channel. CF(1) has five subunits: alpha(3), beta(3), gamma(1), delta(1), epsilon(1). CF(0) has three main subunits: a(1), b(2) and c(9-12). The alpha and beta chains form an alternating ring which encloses part of the gamma chain. CF(1) is attached to CF(0) by a central stalk formed by the gamma and epsilon chains, while a peripheral stalk is formed by the delta and b chains.

The protein localises to the cell inner membrane. The enzyme catalyses ATP + H2O + 4 H(+)(in) = ADP + phosphate + 5 H(+)(out). Functionally, produces ATP from ADP in the presence of a proton gradient across the membrane. The catalytic sites are hosted primarily by the beta subunits. The chain is ATP synthase subunit beta from Xanthomonas oryzae pv. oryzae (strain KACC10331 / KXO85).